A 1132-amino-acid polypeptide reads, in one-letter code: Telomerase reverse transcriptase (1132 aa).

A disordered region spans residues methionine 1–asparagine 66. Composition is skewed to polar residues over residues serine 9–threonine 26 and glutamine 45–arginine 55. In terms of domain architecture, Reverse transcriptase spans lysine 602–isoleucine 956. Mg(2+) contacts are provided by aspartate 708, aspartate 886, and aspartate 887.

The protein belongs to the reverse transcriptase family. Telomerase subfamily.

It localises to the nucleus. It is found in the chromosome. Its subcellular location is the telomere. It carries out the reaction DNA(n) + a 2'-deoxyribonucleoside 5'-triphosphate = DNA(n+1) + diphosphate. Its function is as follows. Telomerase is a ribonucleoprotein enzyme essential for the replication of chromosome termini in most eukaryotes. It elongates telomeres. It is a reverse transcriptase that adds simple sequence repeats to chromosome ends by copying a template sequence within the RNA component of the enzyme. The protein is Telomerase reverse transcriptase (TERT) of Oxytricha trifallax (Sterkiella histriomuscorum).